A 368-amino-acid polypeptide reads, in one-letter code: Glutamate 5-kinase (368 aa).

An ATP-binding site is contributed by Lys-15. Substrate is bound by residues Ser-55, Asp-143, and Asn-155. Residues 175-176 and 217-223 contribute to the ATP site; these read SD and SGGMVSK. The 78-residue stretch at 277-354 folds into the PUA domain; the sequence is EGRLTIDAGA…DAQEAALGYA (78 aa).

Belongs to the glutamate 5-kinase family.

Its subcellular location is the cytoplasm. The catalysed reaction is L-glutamate + ATP = L-glutamyl 5-phosphate + ADP. It participates in amino-acid biosynthesis; L-proline biosynthesis; L-glutamate 5-semialdehyde from L-glutamate: step 1/2. In terms of biological role, catalyzes the transfer of a phosphate group to glutamate to form L-glutamate 5-phosphate. The polypeptide is Glutamate 5-kinase (Sphingopyxis alaskensis (strain DSM 13593 / LMG 18877 / RB2256) (Sphingomonas alaskensis)).